The chain runs to 291 residues: Formamidopyrimidine-DNA glycosylase (291 aa).

Pro-2 (schiff-base intermediate with DNA) is an active-site residue. The active-site Proton donor is the Glu-3. Lys-60 acts as the Proton donor; for beta-elimination activity in catalysis. DNA contacts are provided by His-97, Arg-116, and Arg-161. The FPG-type zinc finger occupies 246–280; that stretch reads WVYNRAGEPCRVCGMPIQRIRLAGRSSHFCSECQT. Arg-270 functions as the Proton donor; for delta-elimination activity in the catalytic mechanism.

This sequence belongs to the FPG family. Monomer. Requires Zn(2+) as cofactor.

It catalyses the reaction Hydrolysis of DNA containing ring-opened 7-methylguanine residues, releasing 2,6-diamino-4-hydroxy-5-(N-methyl)formamidopyrimidine.. The catalysed reaction is 2'-deoxyribonucleotide-(2'-deoxyribose 5'-phosphate)-2'-deoxyribonucleotide-DNA = a 3'-end 2'-deoxyribonucleotide-(2,3-dehydro-2,3-deoxyribose 5'-phosphate)-DNA + a 5'-end 5'-phospho-2'-deoxyribonucleoside-DNA + H(+). Functionally, involved in base excision repair of DNA damaged by oxidation or by mutagenic agents. Acts as a DNA glycosylase that recognizes and removes damaged bases. Has a preference for oxidized purines, such as 7,8-dihydro-8-oxoguanine (8-oxoG). Has AP (apurinic/apyrimidinic) lyase activity and introduces nicks in the DNA strand. Cleaves the DNA backbone by beta-delta elimination to generate a single-strand break at the site of the removed base with both 3'- and 5'-phosphates. This chain is Formamidopyrimidine-DNA glycosylase, found in Nostoc punctiforme (strain ATCC 29133 / PCC 73102).